A 496-amino-acid polypeptide reads, in one-letter code: Transcription termination factor MTERF9, chloroplastic (496 aa).

The N-terminal 44 residues, 1–44 (MAGFSLYCFKNPRILFTLPSESPLFVLGSDKCSPATRRPSRKTR), are a transit peptide targeting the chloroplast. 2 disordered regions span residues 57 to 90 (IINP…DDDW) and 102 to 155 (YEKK…SWRL). The span at 74–90 (DSDEDDDDDDDDDDDDW) shows a compositional bias: acidic residues. Residues 105 to 123 (KKPKSHKQTIAKKSVKKGI) are compositionally biased toward basic residues. The span at 146–155 (SEKKKESWRL) shows a compositional bias: basic and acidic residues.

Belongs to the mTERF family.

The protein localises to the plastid. Its subcellular location is the chloroplast. Functionally, transcription termination factor required for processing and steady-state levels of plastid transcripts. May play a role in response to abiotic stresses. This is Transcription termination factor MTERF9, chloroplastic from Arabidopsis thaliana (Mouse-ear cress).